The chain runs to 210 residues: Protein SYM1 (210 aa).

The next 4 membrane-spanning stretches (helical) occupy residues 22 to 39 (IMTG…QLLF), 68 to 84 (AVVY…DRWY), 112 to 129 (LGFA…MSLL), and 173 to 189 (LLAA…FLSY).

Belongs to the peroxisomal membrane protein PXMP2/4 family.

The protein resides in the mitochondrion inner membrane. Its function is as follows. May be involved in cellular response to stress. Required to maintain mitochondrial DNA (mtDNA) integrity and stability. In Candida glabrata (strain ATCC 2001 / BCRC 20586 / JCM 3761 / NBRC 0622 / NRRL Y-65 / CBS 138) (Yeast), this protein is Protein SYM1 (SYM1).